Here is a 447-residue protein sequence, read N- to C-terminus: uncharacterized protein (447 aa).

Positions 87, 93, 96, and 162 each coordinate [4Fe-4S] cluster. The S-adenosyl-L-methionine site is built by Gln-284, Tyr-313, Glu-334, and Asp-375. The active-site Nucleophile is the Cys-402.

Belongs to the class I-like SAM-binding methyltransferase superfamily. RNA M5U methyltransferase family.

This is an uncharacterized protein from Nanoarchaeum equitans (strain Kin4-M).